Here is a 253-residue protein sequence, read N- to C-terminus: Imidazole glycerol phosphate synthase subunit HisF (253 aa).

Catalysis depends on residues D12 and D131.

Belongs to the HisA/HisF family. In terms of assembly, heterodimer of HisH and HisF.

It localises to the cytoplasm. It carries out the reaction 5-[(5-phospho-1-deoxy-D-ribulos-1-ylimino)methylamino]-1-(5-phospho-beta-D-ribosyl)imidazole-4-carboxamide + L-glutamine = D-erythro-1-(imidazol-4-yl)glycerol 3-phosphate + 5-amino-1-(5-phospho-beta-D-ribosyl)imidazole-4-carboxamide + L-glutamate + H(+). It participates in amino-acid biosynthesis; L-histidine biosynthesis; L-histidine from 5-phospho-alpha-D-ribose 1-diphosphate: step 5/9. IGPS catalyzes the conversion of PRFAR and glutamine to IGP, AICAR and glutamate. The HisF subunit catalyzes the cyclization activity that produces IGP and AICAR from PRFAR using the ammonia provided by the HisH subunit. The sequence is that of Imidazole glycerol phosphate synthase subunit HisF from Corynebacterium urealyticum (strain ATCC 43042 / DSM 7109).